A 271-amino-acid polypeptide reads, in one-letter code: Putative pyruvate, phosphate dikinase regulatory protein 1 (271 aa).

156–163 (GVSRTSKT) provides a ligand contact to ADP.

The protein belongs to the pyruvate, phosphate/water dikinase regulatory protein family. PDRP subfamily.

The catalysed reaction is N(tele)-phospho-L-histidyl/L-threonyl-[pyruvate, phosphate dikinase] + ADP = N(tele)-phospho-L-histidyl/O-phospho-L-threonyl-[pyruvate, phosphate dikinase] + AMP + H(+). It catalyses the reaction N(tele)-phospho-L-histidyl/O-phospho-L-threonyl-[pyruvate, phosphate dikinase] + phosphate + H(+) = N(tele)-phospho-L-histidyl/L-threonyl-[pyruvate, phosphate dikinase] + diphosphate. Bifunctional serine/threonine kinase and phosphorylase involved in the regulation of the pyruvate, phosphate dikinase (PPDK) by catalyzing its phosphorylation/dephosphorylation. In Staphylococcus saprophyticus subsp. saprophyticus (strain ATCC 15305 / DSM 20229 / NCIMB 8711 / NCTC 7292 / S-41), this protein is Putative pyruvate, phosphate dikinase regulatory protein 1.